Consider the following 293-residue polypeptide: Adenylyl-sulfate kinase 2, chloroplastic (293 aa).

The transit peptide at 1–59 directs the protein to the chloroplast; the sequence is MEGLAIRASRPSVFCSIPGLGGDSHRKPPSDGFLKLPASSIPADSRKLVANSTSFHPIS. 122–130 provides a ligand contact to ATP; sequence GLSGSGKST. Substrate contacts are provided by residues Asp-152, Arg-155, Arg-169, Asn-172, 195–196, and Gly-245; that span reads IS. Catalysis depends on Ser-196, which acts as the Phosphoserine intermediate.

Belongs to the APS kinase family. In terms of assembly, interacts with APK1. In terms of tissue distribution, expressed in root vasculature, root tips, leaf epidermal cells and funiculus of developing seeds.

Its subcellular location is the plastid. It is found in the chloroplast. The catalysed reaction is adenosine 5'-phosphosulfate + ATP = 3'-phosphoadenylyl sulfate + ADP + H(+). It functions in the pathway sulfur metabolism; hydrogen sulfide biosynthesis; sulfite from sulfate: step 2/3. Catalyzes the synthesis of activated sulfate. Essential for plant reproduction and viability. Required for the production of glucosinolates. The chain is Adenylyl-sulfate kinase 2, chloroplastic (APK2) from Arabidopsis thaliana (Mouse-ear cress).